Here is a 178-residue protein sequence, read N- to C-terminus: Large ribosomal subunit protein uL5 (178 aa).

It belongs to the universal ribosomal protein uL5 family. In terms of assembly, part of the 50S ribosomal subunit; part of the 5S rRNA/L5/L18/L25 subcomplex. Contacts the 5S rRNA and the P site tRNA. Forms a bridge to the 30S subunit in the 70S ribosome.

Functionally, this is one of the proteins that bind and probably mediate the attachment of the 5S RNA into the large ribosomal subunit, where it forms part of the central protuberance. In the 70S ribosome it contacts protein S13 of the 30S subunit (bridge B1b), connecting the 2 subunits; this bridge is implicated in subunit movement. Contacts the P site tRNA; the 5S rRNA and some of its associated proteins might help stabilize positioning of ribosome-bound tRNAs. The chain is Large ribosomal subunit protein uL5 from Prochlorococcus marinus (strain MIT 9515).